The primary structure comprises 364 residues: A-type ATP synthase subunit C (364 aa).

Belongs to the V-ATPase V0D/AC39 subunit family. Has multiple subunits with at least A(3), B(3), C, D, E, F, H, I and proteolipid K(x).

It is found in the cell membrane. Component of the A-type ATP synthase that produces ATP from ADP in the presence of a proton gradient across the membrane. This Desulfurococcus sp. (strain SY) protein is A-type ATP synthase subunit C.